We begin with the raw amino-acid sequence, 144 residues long: Large ribosomal subunit protein uL13 (144 aa).

This sequence belongs to the universal ribosomal protein uL13 family. In terms of assembly, part of the 50S ribosomal subunit.

Functionally, this protein is one of the early assembly proteins of the 50S ribosomal subunit, although it is not seen to bind rRNA by itself. It is important during the early stages of 50S assembly. The polypeptide is Large ribosomal subunit protein uL13 (Moorella thermoacetica (strain ATCC 39073 / JCM 9320)).